A 1944-amino-acid chain; its full sequence is uncharacterized protein (1944 aa).

The tract at residues 908-999 is disordered; sequence SQNLNFLKSK…SESEEESSNG (92 aa). Composition is skewed to basic and acidic residues over residues 916-929 and 939-949; these read SKQETTQRIRESAK and LSEKLNSDNHI. The segment covering 985–996 has biased composition (acidic residues); the sequence is SDEDTSESEEES. ATP is bound at residue 1293 to 1300; the sequence is GPPGTGKT. The disordered stretch occupies residues 1824-1944; it reads QEAHKVKKRH…PPKVEHFKRK (121 aa). Composition is skewed to basic and acidic residues over residues 1843–1852 and 1869–1891; these read GTERDEDIPN and KVTKPRLDESSSSKQDVLNKIDE. The span at 1912 to 1922 shows a compositional bias: basic residues; the sequence is GHMKKSKKPKS.

It belongs to the DNA2/NAM7 helicase family.

The protein localises to the nucleus. This is an uncharacterized protein from Schizosaccharomyces pombe (strain 972 / ATCC 24843) (Fission yeast).